The following is a 288-amino-acid chain: UAP56-interacting factor (288 aa).

Residues 11 to 29 (TIDKIDMSLDDIIKLNKQE) carry the UAP56-binding motif motif. A disordered region spans residues 183–202 (DLPELSKTPPWRTSVSSGGS).

Belongs to the UIF family.

The protein localises to the nucleus. The protein resides in the nucleoplasm. It is found in the nucleus speckle. Its function is as follows. Required for mRNA export from the nucleus to the cytoplasm. Acts as an adapter that uses the ddx39b/uap56-nfx1 pathway to ensure efficient mRNA export and delivering to the nuclear pore. This is UAP56-interacting factor (fyttd1) from Xenopus laevis (African clawed frog).